The following is a 134-amino-acid chain: Putative cytochrome c oxidase subunit 6b-like (134 aa).

Residues Met1–Val61 form a disordered region. 2 stretches are compositionally biased toward basic and acidic residues: residues Asp7–Lys19 and Ala44–Val61. Residues Thr71–Ile114 form the CHCH domain. A Cx9C motif motif is present at residues Cys74–Cys84. Disulfide bonds link Cys74–Cys106 and Cys84–Cys95. Positions Cys95 to Cys106 match the Cx10C motif motif.

This sequence belongs to the cytochrome c oxidase subunit 6B (TC 3.D.4.8) family.

It is found in the mitochondrion. Its function is as follows. This protein is one of the nuclear-coded polypeptide chains of cytochrome c oxidase, the terminal oxidase in mitochondrial electron transport. This protein may be one of the heme-binding subunits of the oxidase. The protein is Putative cytochrome c oxidase subunit 6b-like of Arabidopsis thaliana (Mouse-ear cress).